The chain runs to 107 residues: Small ribosomal subunit protein uS10c (107 aa).

It belongs to the universal ribosomal protein uS10 family. In terms of assembly, part of the 30S ribosomal subunit.

It localises to the plastid. Its subcellular location is the chloroplast. Its function is as follows. Involved in the binding of tRNA to the ribosomes. The protein is Small ribosomal subunit protein uS10c of Thalassiosira pseudonana (Marine diatom).